The sequence spans 334 residues: Ornithine carbamoyltransferase (334 aa).

Carbamoyl phosphate is bound by residues 56-59 (STRT), Q83, R107, and 134-137 (HPTQ). L-ornithine-binding positions include N168, D232, and 236–237 (SM). Carbamoyl phosphate contacts are provided by residues 274 to 275 (CL) and R320.

This sequence belongs to the aspartate/ornithine carbamoyltransferase superfamily. OTCase family.

Its subcellular location is the cytoplasm. The enzyme catalyses carbamoyl phosphate + L-ornithine = L-citrulline + phosphate + H(+). It participates in amino-acid biosynthesis; L-arginine biosynthesis; L-arginine from L-ornithine and carbamoyl phosphate: step 1/3. Reversibly catalyzes the transfer of the carbamoyl group from carbamoyl phosphate (CP) to the N(epsilon) atom of ornithine (ORN) to produce L-citrulline. This Escherichia coli O45:K1 (strain S88 / ExPEC) protein is Ornithine carbamoyltransferase.